The sequence spans 258 residues: MTRYKAQISYDGSAFSGFQRQPNCRTVQEEIERTLKRLNSGNDVIIHGAGRTDAGVHAYGQVIHFDLPQARDVEKLRFGLDTQCPDDIDIVKVEQVSDDFHCRYDKHIKTYEFLVDIGRPKNPMMRNYATHYPYPVIIELMQEAIKDLVGTHDFTGFTASGTSVENKVRTIFDAKIQFEASKNLLIFTFTGNGFLYKQVRNMVGTLLKIGNGRMPISQIKTILQAKNRDLAGPTAAGNGLYLKEIIYEDKECFSNFRK.

Aspartate 53 (nucleophile) is an active-site residue. Tyrosine 111 contributes to the substrate binding site.

The protein belongs to the tRNA pseudouridine synthase TruA family. Homodimer.

The enzyme catalyses uridine(38/39/40) in tRNA = pseudouridine(38/39/40) in tRNA. In terms of biological role, formation of pseudouridine at positions 38, 39 and 40 in the anticodon stem and loop of transfer RNAs. The protein is tRNA pseudouridine synthase A of Streptococcus agalactiae serotype III (strain NEM316).